The following is a 264-amino-acid chain: 3-methyl-2-oxobutanoate hydroxymethyltransferase (264 aa).

Asp-45 and Asp-84 together coordinate Mg(2+). 3-methyl-2-oxobutanoate-binding positions include Asp-45–Ser-46, Asp-84, and Lys-112. Glu-114 serves as a coordination point for Mg(2+). The Proton acceptor role is filled by Glu-181.

Belongs to the PanB family. In terms of assembly, homodecamer; pentamer of dimers. Mg(2+) is required as a cofactor.

It localises to the cytoplasm. The enzyme catalyses 3-methyl-2-oxobutanoate + (6R)-5,10-methylene-5,6,7,8-tetrahydrofolate + H2O = 2-dehydropantoate + (6S)-5,6,7,8-tetrahydrofolate. The protein operates within cofactor biosynthesis; (R)-pantothenate biosynthesis; (R)-pantoate from 3-methyl-2-oxobutanoate: step 1/2. Catalyzes the reversible reaction in which hydroxymethyl group from 5,10-methylenetetrahydrofolate is transferred onto alpha-ketoisovalerate to form ketopantoate. The chain is 3-methyl-2-oxobutanoate hydroxymethyltransferase from Escherichia coli O81 (strain ED1a).